Consider the following 310-residue polypeptide: tRNA-cytidine(32) 2-sulfurtransferase (310 aa).

Residues 44–49 (SGGKDS) carry the PP-loop motif motif. Residues Cys119, Cys122, and Cys210 each coordinate [4Fe-4S] cluster.

This sequence belongs to the TtcA family. As to quaternary structure, homodimer. Mg(2+) serves as cofactor. Requires [4Fe-4S] cluster as cofactor.

The protein localises to the cytoplasm. It catalyses the reaction cytidine(32) in tRNA + S-sulfanyl-L-cysteinyl-[cysteine desulfurase] + AH2 + ATP = 2-thiocytidine(32) in tRNA + L-cysteinyl-[cysteine desulfurase] + A + AMP + diphosphate + H(+). It functions in the pathway tRNA modification. Functionally, catalyzes the ATP-dependent 2-thiolation of cytidine in position 32 of tRNA, to form 2-thiocytidine (s(2)C32). The sulfur atoms are provided by the cysteine/cysteine desulfurase (IscS) system. This is tRNA-cytidine(32) 2-sulfurtransferase from Saccharophagus degradans (strain 2-40 / ATCC 43961 / DSM 17024).